A 190-amino-acid polypeptide reads, in one-letter code: ATP synthase subunit C lysine N-methyltransferase (190 aa).

Belongs to the ANT/ATPSC lysine N-methyltransferase family.

It is found in the mitochondrion. The catalysed reaction is L-lysyl-[protein] + 3 S-adenosyl-L-methionine = N(6),N(6),N(6)-trimethyl-L-lysyl-[protein] + 3 S-adenosyl-L-homocysteine + 3 H(+). Its function is as follows. Mitochondrial protein-lysine N-methyltransferase that trimethylates ATP synthase subunit C. Trimethylation is required for proper incorporation of the C subunit into the ATP synthase complex and mitochondrial respiration. The chain is ATP synthase subunit C lysine N-methyltransferase from Caenorhabditis elegans.